Consider the following 430-residue polypeptide: Enolase (430 aa).

Q163 is a binding site for (2R)-2-phosphoglycerate. Catalysis depends on E205, which acts as the Proton donor. The Mg(2+) site is built by D242, E288, and D315. The (2R)-2-phosphoglycerate site is built by K340, R369, S370, and K391. The active-site Proton acceptor is K340.

It belongs to the enolase family. Requires Mg(2+) as cofactor.

It is found in the cytoplasm. It localises to the secreted. Its subcellular location is the cell surface. The enzyme catalyses (2R)-2-phosphoglycerate = phosphoenolpyruvate + H2O. Its pathway is carbohydrate degradation; glycolysis; pyruvate from D-glyceraldehyde 3-phosphate: step 4/5. Functionally, catalyzes the reversible conversion of 2-phosphoglycerate (2-PG) into phosphoenolpyruvate (PEP). It is essential for the degradation of carbohydrates via glycolysis. The protein is Enolase of Onion yellows phytoplasma (strain OY-M).